Here is a 513-residue protein sequence, read N- to C-terminus: ATP synthase subunit alpha (513 aa).

169–176 (GDRQTGKT) contributes to the ATP binding site.

The protein belongs to the ATPase alpha/beta chains family. As to quaternary structure, F-type ATPases have 2 components, CF(1) - the catalytic core - and CF(0) - the membrane proton channel. CF(1) has five subunits: alpha(3), beta(3), gamma(1), delta(1), epsilon(1). CF(0) has three main subunits: a(1), b(2) and c(9-12). The alpha and beta chains form an alternating ring which encloses part of the gamma chain. CF(1) is attached to CF(0) by a central stalk formed by the gamma and epsilon chains, while a peripheral stalk is formed by the delta and b chains.

It localises to the cell inner membrane. The enzyme catalyses ATP + H2O + 4 H(+)(in) = ADP + phosphate + 5 H(+)(out). In terms of biological role, produces ATP from ADP in the presence of a proton gradient across the membrane. The alpha chain is a regulatory subunit. This Salmonella arizonae (strain ATCC BAA-731 / CDC346-86 / RSK2980) protein is ATP synthase subunit alpha.